A 571-amino-acid polypeptide reads, in one-letter code: Proline--tRNA ligase (571 aa).

It belongs to the class-II aminoacyl-tRNA synthetase family. ProS type 1 subfamily. As to quaternary structure, homodimer.

It localises to the cytoplasm. The enzyme catalyses tRNA(Pro) + L-proline + ATP = L-prolyl-tRNA(Pro) + AMP + diphosphate. Its function is as follows. Catalyzes the attachment of proline to tRNA(Pro) in a two-step reaction: proline is first activated by ATP to form Pro-AMP and then transferred to the acceptor end of tRNA(Pro). As ProRS can inadvertently accommodate and process non-cognate amino acids such as alanine and cysteine, to avoid such errors it has two additional distinct editing activities against alanine. One activity is designated as 'pretransfer' editing and involves the tRNA(Pro)-independent hydrolysis of activated Ala-AMP. The other activity is designated 'posttransfer' editing and involves deacylation of mischarged Ala-tRNA(Pro). The misacylated Cys-tRNA(Pro) is not edited by ProRS. The chain is Proline--tRNA ligase from Pseudomonas putida (strain GB-1).